The primary structure comprises 126 residues: Protein ApaG (126 aa).

The ApaG domain occupies 2–126 (SDSRYKVDVS…FRLAVPGSLH (125 aa)).

The protein is Protein ApaG of Pseudomonas syringae pv. tomato (strain ATCC BAA-871 / DC3000).